We begin with the raw amino-acid sequence, 963 residues long: Ubiquitin carboxyl-terminal hydrolase 4 (963 aa).

The region spanning 11–122 is the DUSP domain; sequence PDAETQKSEL…GQQPIVRKVV (112 aa). The tract at residues 27–216 is necessary for interaction with SART3; sequence TLQRGAQWYL…LYQGQVLVIE (190 aa). The Nuclear export signal motif lies at 133–141; that stretch reads VEVYLLELK. One can recognise a Ubiquitin-like 1 domain in the interval 142-226; that stretch reads LCENSDPTNV…PQNEDGTWPR (85 aa). Positions 219–277 are disordered; it reads NEDGTWPRQTQQSKSSTAPSRNFTTSPKSSASPYSSVSASPIANGDSTNTSGMHSSGVS. A compositionally biased stretch (polar residues) spans 225–243; sequence PRQTQQSKSSTAPSRNFTT. The interval 229 to 295 is required for USP4 activation by providing conformational flexibility between the DUSP and catalytic domains; that stretch reads QQSKSSTAPS…SYNCQESPLT (67 aa). Over residues 244 to 261 the composition is skewed to low complexity; it reads SPKSSASPYSSVSASPIA. Positions 302–923 constitute a USP domain; it reads CGLGNLGNTC…AAYVLFYQRR (622 aa). Cysteine 311 (nucleophile) is an active-site residue. The tract at residues 384–386 is regulates ubiquitin dissociation; it reads PQF. A necessary for interaction with RBL2 region spans residues 405–407; the sequence is LHE. Serine 445 bears the Phosphoserine mark. Positions 459 to 463 are necessary for interaction with RB1 and RBL2; the sequence is LVCPE. Residues cysteine 461 and cysteine 464 each coordinate Zn(2+). The Ubiquitin-like 2 domain occupies 483 to 571; it reads LKKDRVMEIF…IFVYEVCSTS (89 aa). The interacts with DUSP and ubiquitin-like 1 domains and is required for USP4 activation stretch occupies residues 485–775; that stretch reads KDRVMEIFLV…LQPQKKKKTA (291 aa). The disordered stretch occupies residues 634-701; sequence PLPDESGSSP…ATQKKNKGRP (68 aa). 2 positions are modified to phosphoserine: serine 675 and serine 680. The Nuclear localization signal motif lies at 767–772; sequence QPQKKK. The Zn(2+) site is built by cysteine 799 and cysteine 802. The active-site Proton acceptor is histidine 881. The tract at residues 930–963 is disordered; sequence TPSLSFPGSSDGGARPSSSQQGTGDDETYSMDTN. Acidic residues predominate over residues 953–963; it reads GDDETYSMDTN.

It belongs to the peptidase C19 family. USP4 subfamily. Interacts with RB1 (both dephosphorylated and hypophosphorylated forms). Interacts with RBL1 and RBL2. Interacts with ADORA2A (via cytoplasmic C-terminus); the interaction is direct. Interacts with SART3; recruits USP4 to its substrate PRPF3. Phosphorylated at Ser-445 by PKB/AKT1 in response to EGF stimulus, promoting its ability deubiquitinate RHEB. Post-translationally, monoubiquitinated by TRIM21. Ubiquitination does not lead to its proteasomal degradation. Autodeubiquitinated.

The protein localises to the cytoplasm. Its subcellular location is the nucleus. The catalysed reaction is Thiol-dependent hydrolysis of ester, thioester, amide, peptide and isopeptide bonds formed by the C-terminal Gly of ubiquitin (a 76-residue protein attached to proteins as an intracellular targeting signal).. The completion of the deubiquitinase reaction is mediated by the DUSP and ubiquitin-like 1 domains which promotes the release of ubiquitin from the catalytic site enabling subsequent reactions to occur. Its function is as follows. Deubiquitinating enzyme that removes conjugated ubiquitin from target proteins. Deubiquitinates PDPK1. Deubiquitinates TRIM21. Deubiquitinates receptor ADORA2A which increases the amount of functional receptor at the cell surface. Deubiquitinates HAS2. Deubiquitinates RHEB in response to EGF signaling, promoting mTORC1 signaling. May regulate mRNA splicing through deubiquitination of the U4 spliceosomal protein PRPF3. This may prevent its recognition by the U5 component PRPF8 thereby destabilizing interactions within the U4/U6.U5 snRNP. May also play a role in the regulation of quality control in the ER. The protein is Ubiquitin carboxyl-terminal hydrolase 4 (USP4) of Bos taurus (Bovine).